The chain runs to 475 residues: Ribulose bisphosphate carboxylase large chain (475 aa).

Residues 1 to 2 (MS) constitute a propeptide that is removed on maturation. An N-acetylproline modification is found at Pro-3. Substrate is bound by residues Asn-123 and Thr-173. Lys-175 functions as the Proton acceptor in the catalytic mechanism. Substrate is bound at residue Lys-177. Mg(2+)-binding residues include Lys-201, Asp-203, and Glu-204. Position 201 is an N6-carboxylysine (Lys-201). His-294 (proton acceptor) is an active-site residue. 3 residues coordinate substrate: Arg-295, His-327, and Ser-379.

The protein belongs to the RuBisCO large chain family. Type I subfamily. In terms of assembly, heterohexadecamer of 8 large chains and 8 small chains; disulfide-linked. The disulfide link is formed within the large subunit homodimers. Mg(2+) serves as cofactor. In terms of processing, the disulfide bond which can form in the large chain dimeric partners within the hexadecamer appears to be associated with oxidative stress and protein turnover.

It localises to the plastid. The protein localises to the chloroplast. It carries out the reaction 2 (2R)-3-phosphoglycerate + 2 H(+) = D-ribulose 1,5-bisphosphate + CO2 + H2O. The catalysed reaction is D-ribulose 1,5-bisphosphate + O2 = 2-phosphoglycolate + (2R)-3-phosphoglycerate + 2 H(+). Functionally, ruBisCO catalyzes two reactions: the carboxylation of D-ribulose 1,5-bisphosphate, the primary event in carbon dioxide fixation, as well as the oxidative fragmentation of the pentose substrate in the photorespiration process. Both reactions occur simultaneously and in competition at the same active site. In Welwitschia mirabilis (Tree tumbo), this protein is Ribulose bisphosphate carboxylase large chain.